The primary structure comprises 309 residues: (S)-sulfolactate dehydrogenase (309 aa).

Residues 151 to 152 (GI), Asp-171, 231 to 233 (TAR), and Asp-257 each bind NAD(+). Arg-233 is an active-site residue. Residue Glu-262 is part of the active site. His-281 (proton donor) is an active-site residue. Residue 281-284 (HIAG) participates in NAD(+) binding.

It belongs to the D-isomer specific 2-hydroxyacid dehydrogenase family.

It carries out the reaction (2S)-3-sulfolactate + NAD(+) = 3-sulfopyruvate + NADH + H(+). Its function is as follows. Dehydrogenase of the (R,S)-sulfolactate degradation pathway that only acts on the (S)-enantiomer of 3-sulfolactate. Together with ComC, provides a racemase system that converts (2S)-3-sulfolactate to (2R)-3-sulfolactate, which is degraded further by (2R)-sulfolactate sulfo-lyase. Specific for NAD. Also able to form sulfolactate from sulfopyruvate. In Chromohalobacter salexigens (strain ATCC BAA-138 / DSM 3043 / CIP 106854 / NCIMB 13768 / 1H11), this protein is (S)-sulfolactate dehydrogenase (slcC).